The primary structure comprises 629 residues: tRNA uridine 5-carboxymethylaminomethyl modification enzyme MnmG (629 aa).

Residues 13 to 18 (GGGHAG), valine 125, and serine 180 contribute to the FAD site. 273–287 (GPRYCPSIEDKVMRF) is an NAD(+) binding site. Glutamine 370 is an FAD binding site.

The protein belongs to the MnmG family. Homodimer. Heterotetramer of two MnmE and two MnmG subunits. It depends on FAD as a cofactor.

It is found in the cytoplasm. Its function is as follows. NAD-binding protein involved in the addition of a carboxymethylaminomethyl (cmnm) group at the wobble position (U34) of certain tRNAs, forming tRNA-cmnm(5)s(2)U34. This is tRNA uridine 5-carboxymethylaminomethyl modification enzyme MnmG from Salmonella arizonae (strain ATCC BAA-731 / CDC346-86 / RSK2980).